The chain runs to 352 residues: Ion-translocating oxidoreductase complex subunit D (352 aa).

The next 5 membrane-spanning stretches (helical) occupy residues 20–40, 42–62, 78–109, 123–143, and 148–168; these read IMLLVLLAAVPGIAAQLWFFG, GTLVQILLASVSALLAEALVL, ALLTGLLLAVSIPPLAPWWMVVLGTVFAVIIA, PAMIGYVVLLISFPVQMTSWL, and IAVNIPGFIDAIQVIFSGHTA. The residue at position 187 (Thr-187) is an FMN phosphoryl threonine. 5 consecutive transmembrane segments (helical) span residues 214 to 234, 242 to 262, 267 to 287, 301 to 321, and 322 to 342; these read ILAGAGWQWVNLAWLAGGVWL, WHIPLSFLVTLTLCATLGWLF, LAAPQIHLLSGATMLGAFFIL, LIFGALAGLLVWLIRSFGGYP, and DGVAFAVLLANITVPLIDYYT.

Belongs to the NqrB/RnfD family. In terms of assembly, the complex is composed of six subunits: RsxA, RsxB, RsxC, RsxD, RsxE and RsxG. Requires FMN as cofactor.

It is found in the cell inner membrane. Functionally, part of a membrane-bound complex that couples electron transfer with translocation of ions across the membrane. Required to maintain the reduced state of SoxR. In Escherichia coli O139:H28 (strain E24377A / ETEC), this protein is Ion-translocating oxidoreductase complex subunit D.